Here is a 369-residue protein sequence, read N- to C-terminus: 4-hydroxy-3-methylbut-2-en-1-yl diphosphate synthase (flavodoxin) (369 aa).

[4Fe-4S] cluster contacts are provided by C270, C273, C305, and E312.

Belongs to the IspG family. The cofactor is [4Fe-4S] cluster.

The enzyme catalyses (2E)-4-hydroxy-3-methylbut-2-enyl diphosphate + oxidized [flavodoxin] + H2O + 2 H(+) = 2-C-methyl-D-erythritol 2,4-cyclic diphosphate + reduced [flavodoxin]. It participates in isoprenoid biosynthesis; isopentenyl diphosphate biosynthesis via DXP pathway; isopentenyl diphosphate from 1-deoxy-D-xylulose 5-phosphate: step 5/6. Functionally, converts 2C-methyl-D-erythritol 2,4-cyclodiphosphate (ME-2,4cPP) into 1-hydroxy-2-methyl-2-(E)-butenyl 4-diphosphate. In Haemophilus ducreyi (strain 35000HP / ATCC 700724), this protein is 4-hydroxy-3-methylbut-2-en-1-yl diphosphate synthase (flavodoxin).